Consider the following 253-residue polypeptide: 2-C-methyl-D-erythritol 4-phosphate cytidylyltransferase (253 aa).

The protein belongs to the IspD/TarI cytidylyltransferase family. IspD subfamily.

The enzyme catalyses 2-C-methyl-D-erythritol 4-phosphate + CTP + H(+) = 4-CDP-2-C-methyl-D-erythritol + diphosphate. Its pathway is isoprenoid biosynthesis; isopentenyl diphosphate biosynthesis via DXP pathway; isopentenyl diphosphate from 1-deoxy-D-xylulose 5-phosphate: step 2/6. Catalyzes the formation of 4-diphosphocytidyl-2-C-methyl-D-erythritol from CTP and 2-C-methyl-D-erythritol 4-phosphate (MEP). In Chlorobium chlorochromatii (strain CaD3), this protein is 2-C-methyl-D-erythritol 4-phosphate cytidylyltransferase.